Reading from the N-terminus, the 351-residue chain is Uroporphyrinogen decarboxylase (351 aa).

Substrate-binding positions include 25–29, D74, Y151, S206, and H325; that span reads RQAGR.

Belongs to the uroporphyrinogen decarboxylase family. As to quaternary structure, homodimer.

It is found in the cytoplasm. It carries out the reaction uroporphyrinogen III + 4 H(+) = coproporphyrinogen III + 4 CO2. The protein operates within porphyrin-containing compound metabolism; protoporphyrin-IX biosynthesis; coproporphyrinogen-III from 5-aminolevulinate: step 4/4. Its function is as follows. Catalyzes the decarboxylation of four acetate groups of uroporphyrinogen-III to yield coproporphyrinogen-III. This is Uroporphyrinogen decarboxylase from Chlorobium phaeovibrioides (strain DSM 265 / 1930) (Prosthecochloris vibrioformis (strain DSM 265)).